The following is an 85-amino-acid chain: Large ribosomal subunit protein bL27 (85 aa).

Residues 1–22 (MAHKKAGGSTNNGRDSESKRLG) form a disordered region.

It belongs to the bacterial ribosomal protein bL27 family.

The chain is Large ribosomal subunit protein bL27 from Vibrio atlanticus (strain LGP32) (Vibrio splendidus (strain Mel32)).